A 551-amino-acid polypeptide reads, in one-letter code: Glucans biosynthesis protein D (551 aa).

Positions Met-1–Ala-32 form a signal peptide, tat-type signal.

It belongs to the OpgD/OpgG family. Post-translationally, predicted to be exported by the Tat system. The position of the signal peptide cleavage has not been experimentally proven.

The protein resides in the periplasm. It participates in glycan metabolism; osmoregulated periplasmic glucan (OPG) biosynthesis. Probably involved in the control of the structural glucose backbone of osmoregulated periplasmic glucans (OPGs). This is Glucans biosynthesis protein D from Enterobacter sp. (strain 638).